The following is a 700-amino-acid chain: Probable pre-mRNA-splicing factor ATP-dependent RNA helicase DEAH4 (700 aa).

Alanine 2 is modified (N-acetylalanine). Residues 14–178 form the Helicase ATP-binding domain; sequence VETVEKNSVV…FSGCPVLNVP (165 aa). 27–34 provides a ligand contact to ATP; sequence GETGSGKS. A DEAH box motif is present at residues 124-127; the sequence is DEAH. The 178-residue stretch at 200–377 folds into the Helicase C-terminal domain; sequence SLKVAIDIHV…GSVLYLKSLD (178 aa). Disordered regions lie at residues 463–486 and 654–682; these read PARS…NGSG and GPAP…SENV.

Belongs to the DEAD box helicase family. DEAH subfamily. PRP22 sub-subfamily.

The enzyme catalyses ATP + H2O = ADP + phosphate + H(+). In terms of biological role, may be involved in pre-mRNA splicing. In Arabidopsis thaliana (Mouse-ear cress), this protein is Probable pre-mRNA-splicing factor ATP-dependent RNA helicase DEAH4.